The following is a 1353-amino-acid chain: Stress response protein NST1 (1353 aa).

Positions 1–12 (MSSKSQQPPTGL) are enriched in polar residues. Disordered regions lie at residues 1–66 (MSSK…FFNF), 216–422 (NANA…TQSS), 503–522 (NGLR…VEVD), 531–618 (DHRA…SFGS), 652–694 (RRSV…AEEG), 727–882 (LREL…AKET), 979–1119 (GLKS…DDAF), 1140–1276 (GSLI…GAGV), and 1308–1337 (GGTA…HQQQ). Basic residues predominate over residues 16–25 (AAKKRAKKAA). Positions 26 to 45 (KQSQNPQPQSAPQTSSQTPA) are enriched in low complexity. Over residues 46-59 (SVPPLPPASVPDPL) the composition is skewed to pro residues. A compositionally biased stretch (polar residues) spans 218-229 (NARSFPSPQQTI). Residues 242–254 (REEEYDDEEEIEE) show a composition bias toward acidic residues. Basic residues predominate over residues 268–277 (KKNKKKKKKG). Residues 287–300 (VEPPAPLPPLPPPS) show a composition bias toward pro residues. Positions 317 to 330 (LPTHQPQPLSQQPP) are enriched in low complexity. Pro residues predominate over residues 331–349 (SLNPLPPPAPASAPTPTPP). The span at 368–388 (PARSARAAGKAPASAAPPHNA) shows a compositional bias: low complexity. The span at 531–541 (DHRAPELHDHD) shows a compositional bias: basic and acidic residues. Positions 542–583 (PDDLDGEESEEYDDDDDYADDDELDDDDIGTDEADVGDEIDE) are enriched in acidic residues. The segment covering 654 to 665 (SVREEQNLRDMQ) has biased composition (basic and acidic residues). The segment covering 666-681 (EETDEEEEEEDDDESR) has biased composition (acidic residues). Composition is skewed to basic and acidic residues over residues 682-694 (DEPM…AEEG), 727-750 (LREL…EAQK), and 760-882 (QKAE…AKET). A coiled-coil region spans residues 713-944 (AYRERVAKQR…AAQQAQRERA (232 aa)). A compositionally biased stretch (polar residues) spans 1009–1021 (TNATPGRSMQKTP). Pro residues predominate over residues 1154-1165 (PTPPAPIAPPNL). Polar residues-rich tracts occupy residues 1174–1187 (SDGQ…LRST) and 1209–1220 (QPQQRRPTTSWD).

It belongs to the NST1 family.

Its subcellular location is the cytoplasm. Its function is as follows. May act as a negative regulator of salt tolerance. The protein is Stress response protein NST1 (NST1) of Cryptococcus neoformans var. neoformans serotype D (strain B-3501A) (Filobasidiella neoformans).